We begin with the raw amino-acid sequence, 381 residues long: Homoserine O-succinyltransferase (381 aa).

The AB hydrolase-1 domain occupies 45–360 (NAVLVCHALN…PHGHDAFLLD (316 aa)). Ser-151 serves as the catalytic Nucleophile. Arg-221 is a substrate binding site. Catalysis depends on residues Asp-321 and His-354. Asp-355 lines the substrate pocket.

The protein belongs to the AB hydrolase superfamily. MetX family. As to quaternary structure, homodimer.

The protein resides in the cytoplasm. The catalysed reaction is L-homoserine + succinyl-CoA = O-succinyl-L-homoserine + CoA. It participates in amino-acid biosynthesis; L-methionine biosynthesis via de novo pathway; O-succinyl-L-homoserine from L-homoserine: step 1/1. In terms of biological role, transfers a succinyl group from succinyl-CoA to L-homoserine, forming succinyl-L-homoserine. The polypeptide is Homoserine O-succinyltransferase (Burkholderia cenocepacia (strain ATCC BAA-245 / DSM 16553 / LMG 16656 / NCTC 13227 / J2315 / CF5610) (Burkholderia cepacia (strain J2315))).